The sequence spans 297 residues: Small ribosomal subunit biogenesis GTPase RsgA (297 aa).

One can recognise a CP-type G domain in the interval 65–223 (TNEIGRPAVA…IADTPGFSAI (159 aa)). GTP contacts are provided by residues 114-117 (SKAD) and 166-174 (GQSGAGKST). Zn(2+) is bound by residues Cys-247, Cys-252, His-254, and Cys-260.

This sequence belongs to the TRAFAC class YlqF/YawG GTPase family. RsgA subfamily. As to quaternary structure, monomer. Associates with 30S ribosomal subunit, binds 16S rRNA. Requires Zn(2+) as cofactor.

The protein resides in the cytoplasm. Its function is as follows. One of several proteins that assist in the late maturation steps of the functional core of the 30S ribosomal subunit. Helps release RbfA from mature subunits. May play a role in the assembly of ribosomal proteins into the subunit. Circularly permuted GTPase that catalyzes slow GTP hydrolysis, GTPase activity is stimulated by the 30S ribosomal subunit. This is Small ribosomal subunit biogenesis GTPase RsgA from Lactobacillus gasseri (strain ATCC 33323 / DSM 20243 / BCRC 14619 / CIP 102991 / JCM 1131 / KCTC 3163 / NCIMB 11718 / NCTC 13722 / AM63).